The primary structure comprises 99 residues: Large ribosomal subunit protein eL30 (99 aa).

Belongs to the eukaryotic ribosomal protein eL30 family.

The sequence is that of Large ribosomal subunit protein eL30 from Methanobrevibacter smithii (strain ATCC 35061 / DSM 861 / OCM 144 / PS).